The chain runs to 309 residues: Porphobilinogen deaminase (309 aa).

The residue at position 244 (C244) is an S-(dipyrrolylmethanemethyl)cysteine.

It belongs to the HMBS family. As to quaternary structure, monomer. The cofactor is dipyrromethane.

It carries out the reaction 4 porphobilinogen + H2O = hydroxymethylbilane + 4 NH4(+). The protein operates within porphyrin-containing compound metabolism; protoporphyrin-IX biosynthesis; coproporphyrinogen-III from 5-aminolevulinate: step 2/4. Tetrapolymerization of the monopyrrole PBG into the hydroxymethylbilane pre-uroporphyrinogen in several discrete steps. The sequence is that of Porphobilinogen deaminase from Rhizobium meliloti (strain 1021) (Ensifer meliloti).